A 149-amino-acid polypeptide reads, in one-letter code: D-aminoacyl-tRNA deacylase (149 aa).

The short motif at 137–138 (GP) is the Gly-cisPro motif, important for rejection of L-amino acids element.

The protein belongs to the DTD family. In terms of assembly, homodimer.

It localises to the cytoplasm. The enzyme catalyses glycyl-tRNA(Ala) + H2O = tRNA(Ala) + glycine + H(+). The catalysed reaction is a D-aminoacyl-tRNA + H2O = a tRNA + a D-alpha-amino acid + H(+). In terms of biological role, an aminoacyl-tRNA editing enzyme that deacylates mischarged D-aminoacyl-tRNAs. Also deacylates mischarged glycyl-tRNA(Ala), protecting cells against glycine mischarging by AlaRS. Acts via tRNA-based rather than protein-based catalysis; rejects L-amino acids rather than detecting D-amino acids in the active site. By recycling D-aminoacyl-tRNA to D-amino acids and free tRNA molecules, this enzyme counteracts the toxicity associated with the formation of D-aminoacyl-tRNA entities in vivo and helps enforce protein L-homochirality. In Clostridium kluyveri (strain ATCC 8527 / DSM 555 / NBRC 12016 / NCIMB 10680 / K1), this protein is D-aminoacyl-tRNA deacylase.